The following is a 443-amino-acid chain: Signal recognition particle 54 kDa protein (443 aa).

GTP is bound by residues 104-111 (GLQGSGKT), 184-188 (DTAGR), and 242-245 (TKLD).

This sequence belongs to the GTP-binding SRP family. SRP54 subfamily. As to quaternary structure, part of the signal recognition particle protein translocation system, which is composed of SRP and FtsY. Archaeal SRP consists of a 7S RNA molecule of 300 nucleotides and two protein subunits: SRP54 and SRP19.

It localises to the cytoplasm. The enzyme catalyses GTP + H2O = GDP + phosphate + H(+). Involved in targeting and insertion of nascent membrane proteins into the cytoplasmic membrane. Binds to the hydrophobic signal sequence of the ribosome-nascent chain (RNC) as it emerges from the ribosomes. The SRP-RNC complex is then targeted to the cytoplasmic membrane where it interacts with the SRP receptor FtsY. This is Signal recognition particle 54 kDa protein from Methanosarcina barkeri (strain Fusaro / DSM 804).